The following is a 450-amino-acid chain: Tubulin alpha-1 chain (450 aa).

Residues glutamine 11, glutamate 71, glycine 144, threonine 145, threonine 179, asparagine 206, and asparagine 228 each contribute to the GTP site. Glutamate 71 is a binding site for Mg(2+). Glutamate 254 is an active-site residue.

The protein belongs to the tubulin family. As to quaternary structure, dimer of alpha and beta chains. A typical microtubule is a hollow water-filled tube with an outer diameter of 25 nm and an inner diameter of 15 nM. Alpha-beta heterodimers associate head-to-tail to form protofilaments running lengthwise along the microtubule wall with the beta-tubulin subunit facing the microtubule plus end conferring a structural polarity. Microtubules usually have 13 protofilaments but different protofilament numbers can be found in some organisms and specialized cells. Requires Mg(2+) as cofactor. In terms of processing, undergoes a tyrosination/detyrosination cycle, the cyclic removal and re-addition of a C-terminal tyrosine residue by the enzymes tubulin tyrosine carboxypeptidase (TTCP) and tubulin tyrosine ligase (TTL), respectively.

It is found in the cytoplasm. The protein localises to the cytoskeleton. It carries out the reaction GTP + H2O = GDP + phosphate + H(+). Tubulin is the major constituent of microtubules, a cylinder consisting of laterally associated linear protofilaments composed of alpha- and beta-tubulin heterodimers. Microtubules grow by the addition of GTP-tubulin dimers to the microtubule end, where a stabilizing cap forms. Below the cap, tubulin dimers are in GDP-bound state, owing to GTPase activity of alpha-tubulin. In Oryza sativa subsp. japonica (Rice), this protein is Tubulin alpha-1 chain (TUBA1).